The primary structure comprises 430 residues: Putative FBD-associated F-box protein At5g56440 (430 aa).

The 49-residue stretch at 1-49 folds into the F-box domain; the sequence is MDRISLLPDDVVFKILSFVPTKVVVSTNLLSKRWRYLWKHVPKLDYRDP. One can recognise an FBD domain in the interval 349 to 399; it reads QWEQPSSVPKCLISSLETVEWIDYKGREVEKKVVMYLLENSRQLKTMAIRS.

This Arabidopsis thaliana (Mouse-ear cress) protein is Putative FBD-associated F-box protein At5g56440.